Consider the following 159-residue polypeptide: Large ribosomal subunit protein uL22c (159 aa).

Belongs to the universal ribosomal protein uL22 family. As to quaternary structure, part of the 50S ribosomal subunit.

It localises to the plastid. It is found in the chloroplast. In terms of biological role, this protein binds specifically to 23S rRNA. Functionally, the globular domain of the protein is located near the polypeptide exit tunnel on the outside of the subunit, while an extended beta-hairpin is found that lines the wall of the exit tunnel in the center of the 70S ribosome. This is Large ribosomal subunit protein uL22c (rpl22) from Ipomoea purpurea (Common morning glory).